The primary structure comprises 112 residues: Photosystem II reaction center Psb28 protein (112 aa).

It belongs to the Psb28 family. In terms of assembly, part of the photosystem II complex.

The protein resides in the cellular thylakoid membrane. The chain is Photosystem II reaction center Psb28 protein from Microcystis aeruginosa (strain NIES-843 / IAM M-2473).